A 453-amino-acid chain; its full sequence is Serine--tRNA ligase (453 aa).

252–254 serves as a coordination point for L-serine; it reads TAE. ATP-binding positions include 283-285 and valine 299; that span reads RKE. Glutamate 306 is an L-serine binding site. ATP is bound at residue 370-373; that stretch reads EMVS. Position 405 (threonine 405) interacts with L-serine.

This sequence belongs to the class-II aminoacyl-tRNA synthetase family. Type-1 seryl-tRNA synthetase subfamily. Homodimer. The tRNA molecule binds across the dimer.

The protein localises to the cytoplasm. It catalyses the reaction tRNA(Ser) + L-serine + ATP = L-seryl-tRNA(Ser) + AMP + diphosphate + H(+). The catalysed reaction is tRNA(Sec) + L-serine + ATP = L-seryl-tRNA(Sec) + AMP + diphosphate + H(+). It functions in the pathway aminoacyl-tRNA biosynthesis; selenocysteinyl-tRNA(Sec) biosynthesis; L-seryl-tRNA(Sec) from L-serine and tRNA(Sec): step 1/1. Functionally, catalyzes the attachment of serine to tRNA(Ser). Is also able to aminoacylate tRNA(Sec) with serine, to form the misacylated tRNA L-seryl-tRNA(Sec), which will be further converted into selenocysteinyl-tRNA(Sec). The polypeptide is Serine--tRNA ligase (Sulfurisphaera tokodaii (strain DSM 16993 / JCM 10545 / NBRC 100140 / 7) (Sulfolobus tokodaii)).